Consider the following 265-residue polypeptide: Hydroxyethylthiazole kinase (265 aa).

Met-50 contributes to the substrate binding site. Arg-125 and Thr-171 together coordinate ATP. Residue Gly-198 participates in substrate binding.

It belongs to the Thz kinase family. It depends on Mg(2+) as a cofactor.

The enzyme catalyses 5-(2-hydroxyethyl)-4-methylthiazole + ATP = 4-methyl-5-(2-phosphooxyethyl)-thiazole + ADP + H(+). The protein operates within cofactor biosynthesis; thiamine diphosphate biosynthesis; 4-methyl-5-(2-phosphoethyl)-thiazole from 5-(2-hydroxyethyl)-4-methylthiazole: step 1/1. In terms of biological role, catalyzes the phosphorylation of the hydroxyl group of 4-methyl-5-beta-hydroxyethylthiazole (THZ). The polypeptide is Hydroxyethylthiazole kinase (Salmonella paratyphi C (strain RKS4594)).